Here is a 930-residue protein sequence, read N- to C-terminus: uncharacterized protein (930 aa).

Residues 1–20 form the signal peptide; that stretch reads MPSFVLWTFHLCSQWFQGLT. Residues asparagine 137, asparagine 146, asparagine 164, asparagine 210, asparagine 257, asparagine 628, asparagine 717, and asparagine 799 are each glycosylated (N-linked (GlcNAc...) asparagine).

The protein resides in the secreted. This is an uncharacterized protein from Arthroderma benhamiae (strain ATCC MYA-4681 / CBS 112371) (Trichophyton mentagrophytes).